Consider the following 130-residue polypeptide: Blasticidin-S deaminase (130 aa).

In terms of domain architecture, CMP/dCMP-type deaminase spans Met1 to Arg129. Ser28 serves as a coordination point for substrate. Residue Cys54 participates in Zn(2+) binding. The active-site Proton donor is Glu56. Arg82 contributes to the substrate binding site. Zn(2+) is bound by residues Cys88 and Cys91. Tyr126 serves as a coordination point for substrate.

This sequence belongs to the cytidine and deoxycytidylate deaminase family. Homotetramer. It depends on Zn(2+) as a cofactor.

It carries out the reaction blasticidin S + H2O + H(+) = deaminohydroxyblasticidin S + NH4(+). Its function is as follows. Catalyzes the deamination of the cytosine moiety of the antibiotics blasticidin S, cytomycin and acetylblasticidin S. The chain is Blasticidin-S deaminase (bsd) from Aspergillus terreus (strain NIH 2624 / FGSC A1156).